A 211-amino-acid polypeptide reads, in one-letter code: MNSKDCVVIGIAGASASGKSLIAKTIYEELCRDLGTDQIGVIAEDAYYRDQGHLSMDQRVLTNYDHPKALDHELLCSHLRELKAGNAVDIPVYSYTEHTRTDEKVTLTPKKVIILEGILLLTDPALRKEMDASVFMDTPLDICFMRRLSRDVAERGRTMQSVMSQYTETVRPMFLQFIEPSKQYADIIVPRGGKNRIATDILKARIQHLLA.

ATP is bound at residue 13 to 20; that stretch reads GASASGKS.

It belongs to the uridine kinase family.

The protein resides in the cytoplasm. The catalysed reaction is uridine + ATP = UMP + ADP + H(+). It catalyses the reaction cytidine + ATP = CMP + ADP + H(+). It functions in the pathway pyrimidine metabolism; CTP biosynthesis via salvage pathway; CTP from cytidine: step 1/3. The protein operates within pyrimidine metabolism; UMP biosynthesis via salvage pathway; UMP from uridine: step 1/1. This is Uridine kinase from Shewanella pealeana (strain ATCC 700345 / ANG-SQ1).